The primary structure comprises 92 residues: Large ribosomal subunit protein bL25 (92 aa).

Belongs to the bacterial ribosomal protein bL25 family. In terms of assembly, part of the 50S ribosomal subunit; part of the 5S rRNA/L5/L18/L25 subcomplex. Contacts the 5S rRNA. Binds to the 5S rRNA independently of L5 and L18.

This is one of the proteins that binds to the 5S RNA in the ribosome where it forms part of the central protuberance. In Vibrio parahaemolyticus serotype O3:K6 (strain RIMD 2210633), this protein is Large ribosomal subunit protein bL25.